We begin with the raw amino-acid sequence, 404 residues long: Probable protein phosphatase 2C 30 (404 aa).

The segment covering 42–52 has biased composition (basic and acidic residues); it reads AERGAEEETSG. The tract at residues 42-72 is disordered; that stretch reads AERGAEEETSGKRRRLDGGGGEASTDEEDRE. The PPM-type phosphatase domain occupies 77-399; that stretch reads RYGFTSVCGR…DNVSVVVVNL (323 aa). Positions 111, 112, and 298 each coordinate Mn(2+). A disordered region spans residues 321 to 369; that stretch reads GRRERNRSSPTSNLSPRQSSSSGDEAPNDGAPSAAAGSESDEESAAEED. Residues 330–343 show a composition bias toward polar residues; sequence PTSNLSPRQSSSSG. D390 serves as a coordination point for Mn(2+).

The protein belongs to the PP2C family. In terms of assembly, interacts with PYL5 and SAPK2. Binding to PYL5 is dependent on the presence of abscisic acid (ABA). Interacts with PYL3, PYL5 and PYL9. Binding to PYL5 and PYL9 is dependent on the presence of ABA. The cofactor is Mg(2+). It depends on Mn(2+) as a cofactor.

Its subcellular location is the nucleus. The catalysed reaction is O-phospho-L-seryl-[protein] + H2O = L-seryl-[protein] + phosphate. It carries out the reaction O-phospho-L-threonyl-[protein] + H2O = L-threonyl-[protein] + phosphate. Functionally, together with ABI5, PYL5 and SAPK2, is part of an abscisic acid (ABA) signaling unit that modulates seed germination and early seedling growth. This Oryza sativa subsp. japonica (Rice) protein is Probable protein phosphatase 2C 30.